The following is a 182-amino-acid chain: Ribulose bisphosphate carboxylase small subunit, chloroplastic (182 aa).

The N-terminal 58 residues, 1 to 58, are a transit peptide targeting the chloroplast; that stretch reads MACSMISSATVAAVSRASPAQSSMVAPFTCLKSTSAFPVTQKTNNDITSIASNGGRVQ.

Belongs to the RuBisCO small chain family. In terms of assembly, heterohexadecamer of 8 large and 8 small subunits.

It localises to the plastid. The protein resides in the chloroplast. Its function is as follows. RuBisCO catalyzes two reactions: the carboxylation of D-ribulose 1,5-bisphosphate, the primary event in carbon dioxide fixation, as well as the oxidative fragmentation of the pentose substrate. Both reactions occur simultaneously and in competition at the same active site. Although the small subunit is not catalytic it is essential for maximal activity. This is Ribulose bisphosphate carboxylase small subunit, chloroplastic from Betula pendula (European white birch).